The following is a 577-amino-acid chain: (E)-beta-farnesene synthase (577 aa).

5 residues coordinate Mg(2+): Asp327, Asp331, Asp474, Ser478, and Glu482. The short motif at 327–331 (DDTFD) is the DDXXD motif element.

Belongs to the terpene synthase family. Mg(2+) is required as a cofactor. The cofactor is Co(2+). Requires Mn(2+) as cofactor. Expressed in flowers.

Its subcellular location is the cytoplasm. It catalyses the reaction (2E,6E)-farnesyl diphosphate = (E)-beta-farnesene + diphosphate. The protein operates within secondary metabolite biosynthesis; terpenoid biosynthesis. Its activity is regulated as follows. Strongly inhibited by manganese at concentration higher than 20 uM. Functionally, sesquiterpene cyclase catalyzing the production of beta-farnesene from farnesyl diphosphate. Unable to use geranyl diphosphate as substrate. The sequence is that of (E)-beta-farnesene synthase (CASC125) from Artemisia annua (Sweet wormwood).